Here is a 276-residue protein sequence, read N- to C-terminus: Bis(5'-nucleosyl)-tetraphosphatase, symmetrical (276 aa).

The protein belongs to the Ap4A hydrolase family.

It carries out the reaction P(1),P(4)-bis(5'-adenosyl) tetraphosphate + H2O = 2 ADP + 2 H(+). In terms of biological role, hydrolyzes diadenosine 5',5'''-P1,P4-tetraphosphate to yield ADP. The protein is Bis(5'-nucleosyl)-tetraphosphatase, symmetrical of Mannheimia succiniciproducens (strain KCTC 0769BP / MBEL55E).